The sequence spans 213 residues: Phosphate-specific transport system accessory protein PhoU homolog 2 (213 aa).

It belongs to the PhoU family. In terms of assembly, homodimer.

Its subcellular location is the cytoplasm. In terms of biological role, plays a role in the regulation of phosphate uptake. In this role, it may bind, possibly as a chaperone, to PhoR, PhoP or a PhoR-PhoP complex to promote dephosphorylation of phospho-PhoP, or inhibit formation of the PhoR-PhoP transitory complex. This chain is Phosphate-specific transport system accessory protein PhoU homolog 2 (phoU2), found in Mycobacterium bovis (strain ATCC BAA-935 / AF2122/97).